We begin with the raw amino-acid sequence, 87 residues long: Small ribosomal subunit protein bS20 (87 aa).

Residues 1-24 (MANTAQARKRARQSVERNKHNSSL) form a disordered region.

The protein belongs to the bacterial ribosomal protein bS20 family.

Its function is as follows. Binds directly to 16S ribosomal RNA. In Bordetella petrii (strain ATCC BAA-461 / DSM 12804 / CCUG 43448), this protein is Small ribosomal subunit protein bS20.